A 297-amino-acid polypeptide reads, in one-letter code: 4-diphosphocytidyl-2-C-methyl-D-erythritol kinase (297 aa).

The active site involves K10. Residue P95 to A105 participates in ATP binding. The active site involves D137.

It belongs to the GHMP kinase family. IspE subfamily.

The catalysed reaction is 4-CDP-2-C-methyl-D-erythritol + ATP = 4-CDP-2-C-methyl-D-erythritol 2-phosphate + ADP + H(+). The protein operates within isoprenoid biosynthesis; isopentenyl diphosphate biosynthesis via DXP pathway; isopentenyl diphosphate from 1-deoxy-D-xylulose 5-phosphate: step 3/6. Catalyzes the phosphorylation of the position 2 hydroxy group of 4-diphosphocytidyl-2C-methyl-D-erythritol. The polypeptide is 4-diphosphocytidyl-2-C-methyl-D-erythritol kinase (Streptomyces avermitilis (strain ATCC 31267 / DSM 46492 / JCM 5070 / NBRC 14893 / NCIMB 12804 / NRRL 8165 / MA-4680)).